Consider the following 156-residue polypeptide: Aspartate carbamoyltransferase regulatory chain (156 aa).

Zn(2+) is bound by residues Cys-109, Cys-114, Cys-138, and Cys-141.

The protein belongs to the PyrI family. As to quaternary structure, contains catalytic and regulatory chains. It depends on Zn(2+) as a cofactor.

In terms of biological role, involved in allosteric regulation of aspartate carbamoyltransferase. This is Aspartate carbamoyltransferase regulatory chain from Baumannia cicadellinicola subsp. Homalodisca coagulata.